A 507-amino-acid chain; its full sequence is Steroid (22S)-hydroxylase (507 aa).

Residues 12–32 (LLFFLPYILLALLTFYTTTVA) traverse the membrane as a helical segment. Cysteine 444 contacts heme.

It belongs to the cytochrome P450 family. Requires heme as cofactor.

Its subcellular location is the membrane. The enzyme catalyses a C27-steroid + reduced [NADPH--hemoprotein reductase] + O2 = a (22S)-22-hydroxy C27-steroid + oxidized [NADPH--hemoprotein reductase] + H2O + H(+). It carries out the reaction a C28-steroid + reduced [NADPH--hemoprotein reductase] + O2 = a (22S)-22-hydroxy C28-steroid + oxidized [NADPH--hemoprotein reductase] + H2O + H(+). The catalysed reaction is campesterol + reduced [NADPH--hemoprotein reductase] + O2 = (22S)-22-hydroxycampesterol + oxidized [NADPH--hemoprotein reductase] + H2O + H(+). It catalyses the reaction campestanol + reduced [NADPH--hemoprotein reductase] + O2 = 6-deoxycathasterone + oxidized [NADPH--hemoprotein reductase] + H2O + H(+). Its pathway is plant hormone biosynthesis; brassinosteroid biosynthesis. Involved in reduction steps of the biosynthesis of plant campesterol-derivative steroids, ending to castasterone (CS) but missing brassinolide (BL). Catalyzes the conversion of campesterol (CR) to (22S)-22-hydroxycampesterol (22-OHCR, 22-hydroxyCR) and of campestanol (CN) to 6-deoxycathasterone (6-deoxoCT). The protein is Steroid (22S)-hydroxylase of Brachypodium distachyon (Purple false brome).